The chain runs to 465 residues: A-type ATP synthase subunit B (465 aa).

The protein belongs to the ATPase alpha/beta chains family. As to quaternary structure, has multiple subunits with at least A(3), B(3), C, D, E, F, H, I and proteolipid K(x).

The protein localises to the cell membrane. In terms of biological role, component of the A-type ATP synthase that produces ATP from ADP in the presence of a proton gradient across the membrane. The B chain is a regulatory subunit. The protein is A-type ATP synthase subunit B of Thermococcus onnurineus (strain NA1).